The primary structure comprises 123 residues: Large ribosomal subunit protein uL18 (123 aa).

Belongs to the universal ribosomal protein uL18 family. As to quaternary structure, part of the 50S ribosomal subunit; part of the 5S rRNA/L5/L18/L25 subcomplex. Contacts the 5S and 23S rRNAs.

This is one of the proteins that bind and probably mediate the attachment of the 5S RNA into the large ribosomal subunit, where it forms part of the central protuberance. The protein is Large ribosomal subunit protein uL18 of Desulforudis audaxviator (strain MP104C).